The following is a 459-amino-acid chain: UDP-glycosyltransferase 78D3 (459 aa).

Residues 338-340 (APQ), 355-363 (HGGWNSVLE), and 377-380 (FGDH) each bind UDP-alpha-D-glucose.

It belongs to the UDP-glycosyltransferase family.

In terms of biological role, possesses low quercetin 3-O-glucosyltransferase activity in vitro. This chain is UDP-glycosyltransferase 78D3 (UGT78D3), found in Arabidopsis thaliana (Mouse-ear cress).